A 356-amino-acid polypeptide reads, in one-letter code: Myricetin 7/4'-O-methyltransferase 2 (356 aa).

S-adenosyl-L-methionine is bound at residue aspartate 222. Residue histidine 260 is the Proton acceptor of the active site.

It belongs to the class I-like SAM-binding methyltransferase superfamily. Cation-independent O-methyltransferase family. As to quaternary structure, homodimer.

It carries out the reaction quercetin + S-adenosyl-L-methionine = rhamnetin + S-adenosyl-L-homocysteine + H(+). The enzyme catalyses kaempferol + S-adenosyl-L-methionine = kaempferide + S-adenosyl-L-homocysteine + H(+). It catalyses the reaction myricetin + S-adenosyl-L-methionine = 7-O-methylmyricetin + S-adenosyl-L-homocysteine + H(+). The catalysed reaction is kaempferide + S-adenosyl-L-methionine = 7,4'-O-dimethylkaempferol + S-adenosyl-L-homocysteine + H(+). It carries out the reaction isorhamnetin + S-adenosyl-L-methionine = 3',4'-O-dimethylquercetin + S-adenosyl-L-homocysteine + 2 H(+). The enzyme catalyses 3',4',5,7-tetrahydroxy-3-methoxyflavone + S-adenosyl-L-methionine = 3',4',5-trihydroxy-3,7-dimethoxyflavone + S-adenosyl-L-homocysteine + H(+). It catalyses the reaction rhamnetin + S-adenosyl-L-methionine = 7,4'-O-dimethylquercetin + S-adenosyl-L-homocysteine + H(+). The catalysed reaction is syringetin + S-adenosyl-L-methionine = 7,3',5'-O-trimethylmyricetin + S-adenosyl-L-homocysteine + H(+). It carries out the reaction 3',4',5'-O-trimethylmyricetin + S-adenosyl-L-methionine = 7,3',4',5'-O-tetramethylmyricetin + S-adenosyl-L-homocysteine. Its pathway is flavonoid metabolism. Functionally, flavonoid 7/4'-O-methyltransferase involved in the biosynthesis of polymethoxylated flavonoids natural products such as myricetin derivatives, aroma compounds possessing antioxidant properties and exhibiting pharmacological activities such as anti-carcinogen, anti-viral, anti-thrombotic, anti-diabetic, anti-atherosclerotic, and anti-inflammatory effects. Catalyzes S-adenosylmethionine-dependent regioselective 7/4'-O-methylation of flavonoids; active on various hydroxylated flavonoid substrates. This Solanum lycopersicum (Tomato) protein is Myricetin 7/4'-O-methyltransferase 2.